We begin with the raw amino-acid sequence, 148 residues long: Probable glycine cleavage system H protein 2 (148 aa).

A Lipoyl-binding domain is found at 32–114; the sequence is VIVVGITDIA…YGKGWLVKMK (83 aa). Lysine 73 carries the post-translational modification N6-lipoyllysine.

Belongs to the GcvH family. In terms of assembly, the glycine cleavage system is composed of four proteins: P, T, L and H. (R)-lipoate serves as cofactor.

The glycine cleavage system catalyzes the degradation of glycine. The H protein shuttles the methylamine group of glycine from the P protein to the T protein. The chain is Probable glycine cleavage system H protein 2 from Sulfurisphaera tokodaii (strain DSM 16993 / JCM 10545 / NBRC 100140 / 7) (Sulfolobus tokodaii).